A 261-amino-acid polypeptide reads, in one-letter code: Calbindin (261 aa).

A2 carries the post-translational modification N-acetylalanine. The interaction with RANBP9 stretch occupies residues 2-7 (AESHLQ). EF-hand domains follow at residues 11-46 (ITAS…LLQA), 53-88 (ELSP…EENF), 98-133 (KSCE…LLEK), 142-177 (KLAE…QENF), and 186-221 (MCGK…LCEK). Ca(2+) contacts are provided by D24, D26, S28, Y30, and E35. D111, D113, S115, E122, D155, N157, D159, K161, E166, D199, D201, N203, Y205, and E210 together coordinate Ca(2+).

This sequence belongs to the calbindin family. As to quaternary structure, interacts with RANBP9.

Functionally, buffers cytosolic calcium. May stimulate a membrane Ca(2+)-ATPase and a 3',5'-cyclic nucleotide phosphodiesterase. In Rattus norvegicus (Rat), this protein is Calbindin (Calb1).